Here is a 653-residue protein sequence, read N- to C-terminus: Threonine--tRNA ligase (653 aa).

The region spanning 1–61 is the TGS domain; the sequence is MIKITFPDGN…NEDAEVKLFK (61 aa). The tract at residues 243–542 is catalytic; sequence DHRKIGKELE…LIEHTAGKFP (300 aa). Zn(2+) contacts are provided by Cys-338, His-389, and His-519.

The protein belongs to the class-II aminoacyl-tRNA synthetase family. Homodimer. It depends on Zn(2+) as a cofactor.

It localises to the cytoplasm. The catalysed reaction is tRNA(Thr) + L-threonine + ATP = L-threonyl-tRNA(Thr) + AMP + diphosphate + H(+). Its function is as follows. Catalyzes the attachment of threonine to tRNA(Thr) in a two-step reaction: L-threonine is first activated by ATP to form Thr-AMP and then transferred to the acceptor end of tRNA(Thr). Also edits incorrectly charged L-seryl-tRNA(Thr). This chain is Threonine--tRNA ligase, found in Porphyromonas gingivalis (strain ATCC 33277 / DSM 20709 / CIP 103683 / JCM 12257 / NCTC 11834 / 2561).